A 537-amino-acid chain; its full sequence is Tyrosine-protein kinase Fyn (537 aa).

The N-myristoyl glycine moiety is linked to residue Gly-2. S-palmitoyl cysteine attachment occurs at residues Cys-3 and Cys-6. The residue at position 12 (Thr-12) is a Phosphothreonine; by PKC. Residues 14 to 35 (LTEERDGSLNQSSGYRYGTDPT) form a disordered region. Phosphoserine is present on residues Ser-21 and Ser-26. The SH3 domain occupies 82–143 (TGVTLFVALY…PSNYVAPVDS (62 aa)). An SH2 domain is found at 149–246 (WYFGKLGRKD…GLCCRLVVPC (98 aa)). Tyr-185 is subject to Phosphotyrosine. The Protein kinase domain maps to 271–524 (LQLIKRLGNG…YLQSFLEDYF (254 aa)). ATP is bound by residues 277-285 (LGNGQFGEV) and Lys-299. Catalysis depends on Asp-390, which acts as the Proton acceptor. A Phosphotyrosine; by autocatalysis modification is found at Tyr-420. Position 531 is a phosphotyrosine; by CSK (Tyr-531).

Belongs to the protein kinase superfamily. Tyr protein kinase family. SRC subfamily. As to quaternary structure, interacts (via its SH3 domain) with PIK3R1 and PRMT8. Interacts with FYB1, PAG1, and SH2D1A. Interacts with CD79A (tyrosine-phosphorylated form); the interaction increases FYN activity. Interacts (via SH2 domain) with CSF1R (tyrosine phosphorylated). Interacts with TOM1L1 (phosphorylated form). Interacts with KDR (tyrosine phosphorylated). Interacts (via SH3 domain) with KLHL2 (via N-terminus). Interacts with SH2D1A and SLAMF1. Interacts with ITCH; the interaction phosphorylates ITCH and negatively regulates its activity. Interacts with FASLG. Interacts with RUNX3. Interacts with KIT. Interacts with EPHA8; possible downstream effector of EPHA8 in regulation of cell adhesion. Interacts with PTK2/FAK1; this interaction leads to PTK2/FAK1 phosphorylation and activation. Interacts with CAV1; this interaction couples integrins to the Ras-ERK pathway. Interacts with UNC119. Interacts (via SH2 domain) with PTPRH (phosphorylated form). Interacts with PTPRO (phosphorylated form). Interacts with PTPRB (phosphorylated form). Interacts with FYB2. Interacts with DSCAM. Interacts with SKAP1 and FYB1; this interaction promotes the phosphorylation of CLNK. Interacts with NEDD9; in the presence of PTK2. In terms of assembly, (Microbial infection) Interacts (via its SH3 domain) with hepatitis E virus/HEV protein ORF3. The cofactor is Mn(2+). Autophosphorylated at Tyr-420. Phosphorylation on the C-terminal tail at Tyr-531 by CSK maintains the enzyme in an inactive state. PTPRC/CD45 dephosphorylates Tyr-531 leading to activation. Ultraviolet B (UVB) strongly increase phosphorylation at Thr-12 and kinase activity, and promotes translocation from the cytoplasm to the nucleus. Dephosphorylation at Tyr-420 by PTPN2 negatively regulates T-cell receptor signaling. Phosphorylated at tyrosine residues, which can be enhanced by NTN1. In terms of processing, palmitoylated. Palmitoylation at Cys-3 and Cys-6, probably by ZDHHC21, regulates subcellular location. In terms of tissue distribution, isoform 1 is highly expressed in the brain. Isoform 2 is expressed in cells of hemopoietic lineages, especially T-lymphocytes.

The protein localises to the cytoplasm. The protein resides in the nucleus. It is found in the cell membrane. It localises to the perikaryon. The enzyme catalyses L-tyrosyl-[protein] + ATP = O-phospho-L-tyrosyl-[protein] + ADP + H(+). With respect to regulation, inhibited by phosphorylation of Tyr-531 by leukocyte common antigen and activated by dephosphorylation of this site. Its function is as follows. Non-receptor tyrosine-protein kinase that plays a role in many biological processes including regulation of cell growth and survival, cell adhesion, integrin-mediated signaling, cytoskeletal remodeling, cell motility, immune response and axon guidance. Inactive FYN is phosphorylated on its C-terminal tail within the catalytic domain. Following activation by PKA, the protein subsequently associates with PTK2/FAK1, allowing PTK2/FAK1 phosphorylation, activation and targeting to focal adhesions. Involved in the regulation of cell adhesion and motility through phosphorylation of CTNNB1 (beta-catenin) and CTNND1 (delta-catenin). Regulates cytoskeletal remodeling by phosphorylating several proteins including the actin regulator WAS and the microtubule-associated proteins MAP2 and MAPT. Promotes cell survival by phosphorylating AGAP2/PIKE-A and preventing its apoptotic cleavage. Participates in signal transduction pathways that regulate the integrity of the glomerular slit diaphragm (an essential part of the glomerular filter of the kidney) by phosphorylating several slit diaphragm components including NPHS1, KIRREL1 and TRPC6. Plays a role in neural processes by phosphorylating DPYSL2, a multifunctional adapter protein within the central nervous system, ARHGAP32, a regulator for Rho family GTPases implicated in various neural functions, and SNCA, a small pre-synaptic protein. Involved in reelin signaling by mediating phosphorylation of DAB1 following reelin (RELN)-binding to its receptor. Participates in the downstream signaling pathways that lead to T-cell differentiation and proliferation following T-cell receptor (TCR) stimulation. Phosphorylates PTK2B/PYK2 in response to T-cell receptor activation. Also participates in negative feedback regulation of TCR signaling through phosphorylation of PAG1, thereby promoting interaction between PAG1 and CSK and recruitment of CSK to lipid rafts. CSK maintains LCK and FYN in an inactive form. Promotes CD28-induced phosphorylation of VAV1. In mast cells, phosphorylates CLNK after activation of immunoglobulin epsilon receptor signaling. Can also promote CD244-mediated NK cell activation. This is Tyrosine-protein kinase Fyn (FYN) from Homo sapiens (Human).